The primary structure comprises 740 residues: Ion-translocating oxidoreductase complex subunit C (740 aa).

2 consecutive 4Fe-4S ferredoxin-type domains span residues Gly369 to Tyr397 and Lys407 to Phe436. [4Fe-4S] cluster contacts are provided by Cys377, Cys380, Cys383, Cys387, Cys416, Cys419, Cys422, and Cys426. Residues Lys602–Ala718 are disordered.

The protein belongs to the 4Fe4S bacterial-type ferredoxin family. RnfC subfamily. In terms of assembly, the complex is composed of six subunits: RsxA, RsxB, RsxC, RsxD, RsxE and RsxG. Requires [4Fe-4S] cluster as cofactor.

The protein resides in the cell inner membrane. Its function is as follows. Part of a membrane-bound complex that couples electron transfer with translocation of ions across the membrane. Required to maintain the reduced state of SoxR. The polypeptide is Ion-translocating oxidoreductase complex subunit C (Shigella sonnei (strain Ss046)).